A 252-amino-acid polypeptide reads, in one-letter code: Imidazole glycerol phosphate synthase subunit HisF (252 aa).

Active-site residues include Asp-11 and Asp-130.

Belongs to the HisA/HisF family. As to quaternary structure, heterodimer of HisH and HisF.

Its subcellular location is the cytoplasm. It carries out the reaction 5-[(5-phospho-1-deoxy-D-ribulos-1-ylimino)methylamino]-1-(5-phospho-beta-D-ribosyl)imidazole-4-carboxamide + L-glutamine = D-erythro-1-(imidazol-4-yl)glycerol 3-phosphate + 5-amino-1-(5-phospho-beta-D-ribosyl)imidazole-4-carboxamide + L-glutamate + H(+). It functions in the pathway amino-acid biosynthesis; L-histidine biosynthesis; L-histidine from 5-phospho-alpha-D-ribose 1-diphosphate: step 5/9. IGPS catalyzes the conversion of PRFAR and glutamine to IGP, AICAR and glutamate. The HisF subunit catalyzes the cyclization activity that produces IGP and AICAR from PRFAR using the ammonia provided by the HisH subunit. In Thermococcus gammatolerans (strain DSM 15229 / JCM 11827 / EJ3), this protein is Imidazole glycerol phosphate synthase subunit HisF.